The sequence spans 332 residues: Glycerol-3-phosphate dehydrogenase [NAD(P)+] (332 aa).

Positions 11, 30, and 108 each coordinate NADPH. Sn-glycerol 3-phosphate contacts are provided by Lys-108, Gly-137, and Ser-139. Ala-141 lines the NADPH pocket. Residues Lys-192, Asp-245, Ser-255, Arg-256, and Asn-257 each contribute to the sn-glycerol 3-phosphate site. Residue Lys-192 is the Proton acceptor of the active site. NADPH is bound at residue Arg-256. The NADPH site is built by Val-280 and Glu-282.

The protein belongs to the NAD-dependent glycerol-3-phosphate dehydrogenase family.

It is found in the cytoplasm. It carries out the reaction sn-glycerol 3-phosphate + NAD(+) = dihydroxyacetone phosphate + NADH + H(+). The catalysed reaction is sn-glycerol 3-phosphate + NADP(+) = dihydroxyacetone phosphate + NADPH + H(+). It participates in membrane lipid metabolism; glycerophospholipid metabolism. Catalyzes the reduction of the glycolytic intermediate dihydroxyacetone phosphate (DHAP) to sn-glycerol 3-phosphate (G3P), the key precursor for phospholipid synthesis. This Burkholderia multivorans (strain ATCC 17616 / 249) protein is Glycerol-3-phosphate dehydrogenase [NAD(P)+].